Here is a 402-residue protein sequence, read N- to C-terminus: Selenoprotein P (402 aa).

The signal sequence occupies residues 1 to 19 (MWRGLGLALALCLLLTGGT). Sec-59 is a non-standard amino acid (selenocysteine). Asn-83 and Asn-174 each carry an N-linked (GlcNAc...) asparagine glycan. The interval 196–291 (KTAEASQRHH…VGSESLQPSL (96 aa)) is disordered. A compositionally biased stretch (basic residues) spans 203–231 (RHHHPHPHSHPHPHPHPHPHPHPHPHHGH). Repeat copies occupy residues 204 to 205 (HH), 206 to 207 (HP), 208 to 209 (HP), 210 to 211 (HS), 212 to 213 (HP), 214 to 215 (HP), 216 to 217 (HP), 218 to 219 (HP), 220 to 221 (HP), 222 to 223 (HP), 224 to 225 (HP), 226 to 227 (HP), and 228 to 229 (HH). The interval 204 to 229 (HHHPHPHSHPHPHPHPHPHPHPHPHH) is 13 X 2 AA tandem repeats of H-[PHS]. Positions 232–247 (QLHENAHLSESPKPDT) are enriched in basic and acidic residues. Positions 259 to 269 (LHHHHHRHKGP) are enriched in basic residues. Ser-284 bears the Phosphoserine mark. Residues Sec-297, Sec-307, Sec-338, Sec-350, Sec-363, Sec-365, Sec-372, Sec-388, Sec-390, Sec-397, and Sec-399 are each a non-standard amino acid (selenocysteine). Residues 367–402 (LPPAAUQAAGQQLNPTEASTKUSUKNKAKMUKUPSN) are disordered.

Belongs to the selenoprotein P family. In terms of processing, phosphorylation sites are present in the extracellular medium. Brain and kidney. Most prominently expressed in the cerebellar cortex, hippocampus and olfactory bulb.

It is found in the secreted. Its function is as follows. Constitutes a major selenium pool in the brain and may play an important role in developing and/or modulating the morphology of neurons and/or glial cells. The polypeptide is Selenoprotein P (Bos taurus (Bovine)).